A 126-amino-acid chain; its full sequence is Protein ApaG (126 aa).

The ApaG domain maps to 2 to 126 (DISTPCIKCQ…FRLAIPNILN (125 aa)).

The sequence is that of Protein ApaG from Vibrio atlanticus (strain LGP32) (Vibrio splendidus (strain Mel32)).